A 329-amino-acid chain; its full sequence is Ribosomal protein L11 methyltransferase (329 aa).

S-adenosyl-L-methionine is bound by residues threonine 177, glycine 198, aspartate 220, and asparagine 264.

It belongs to the methyltransferase superfamily. PrmA family.

It is found in the cytoplasm. The enzyme catalyses L-lysyl-[protein] + 3 S-adenosyl-L-methionine = N(6),N(6),N(6)-trimethyl-L-lysyl-[protein] + 3 S-adenosyl-L-homocysteine + 3 H(+). In terms of biological role, methylates ribosomal protein L11. The polypeptide is Ribosomal protein L11 methyltransferase (Helicobacter pylori (strain HPAG1)).